Reading from the N-terminus, the 644-residue chain is MLQDNPLLAQLKQQLHSQTPRAEGVVKATEKGFGFLEVDAQKSYFIPPPQMKKVMHGDRVTAVIHTQKDRETAEPEELIEPFLTRFVGKVHKKDDRLSIVPDHPLLKDAIPCRADRNCEHDFKEGDWAVAQMRRHPLKGDRGFYADLTHFITYSDDHFVPWWVTLARHNLEKEAPNGVATEMLDEGLERRDLTALNFVTIDSASTQDMDDALYVEEGADGKLHLTVAIADPTAWIAEGSKLDDSAKVRAFTNYLPGFNIPMLPRELSDDLCSLRPNQIRPVLACRMTIAADGTIEDDIEFFAATIESKAKLAYDDVSNWLEGAGNWKPESEAIAQQITLLQRVCLSRGEWRKTHALVFKDRPDYRFVLGEKGEVLDIVAEPRRIANRIVEESMIAANICAARVLRDKLGFGIYNVHTGFDPANTEALAALLKTHDVHVDPQEVLTLEGFCKLRRELDAQPSGFLDSRIRRFQSYAEISTEPGPHFGLGLEAYATWTSPIRKYGDMVNHRLLKAIVKGETIARPQDEATVQMAERRRLNRMAERDVGDWLYARFLSDKAGTDTRFAAEIIDISRGGMRVRLVENGAVAFIPAPFLHAVRDELVCSQENGSVQIKGETVYKVTDVIDVNIAEVRMETRSIIARPVV.

Positions 189 to 516 (RRDLTALNFV…NHRLLKAIVK (328 aa)) constitute an RNB domain. The region spanning 561–643 (DTRFAAEIID…ETRSIIARPV (83 aa)) is the S1 motif domain.

Belongs to the RNR ribonuclease family. RNase II subfamily.

The protein localises to the cytoplasm. The catalysed reaction is Exonucleolytic cleavage in the 3'- to 5'-direction to yield nucleoside 5'-phosphates.. In terms of biological role, involved in mRNA degradation. Hydrolyzes single-stranded polyribonucleotides processively in the 3' to 5' direction. This chain is Exoribonuclease 2, found in Enterobacter sp. (strain 638).